A 270-amino-acid chain; its full sequence is Acetyl-coenzyme A carboxylase carboxyl transferase subunit beta (270 aa).

The region spanning 16–270 (LFAKCPACKH…KLLAFHGGSK (255 aa)) is the CoA carboxyltransferase N-terminal domain. 4 residues coordinate Zn(2+): Cys20, Cys23, Cys38, and Cys41. A C4-type zinc finger spans residues 20–41 (CPACKHMIYQKDLGLEKICPKC).

This sequence belongs to the AccD/PCCB family. As to quaternary structure, acetyl-CoA carboxylase is a heterohexamer composed of biotin carboxyl carrier protein (AccB), biotin carboxylase (AccC) and two subunits each of ACCase subunit alpha (AccA) and ACCase subunit beta (AccD). Zn(2+) is required as a cofactor.

The protein localises to the cytoplasm. It catalyses the reaction N(6)-carboxybiotinyl-L-lysyl-[protein] + acetyl-CoA = N(6)-biotinyl-L-lysyl-[protein] + malonyl-CoA. The protein operates within lipid metabolism; malonyl-CoA biosynthesis; malonyl-CoA from acetyl-CoA: step 1/1. Component of the acetyl coenzyme A carboxylase (ACC) complex. Biotin carboxylase (BC) catalyzes the carboxylation of biotin on its carrier protein (BCCP) and then the CO(2) group is transferred by the transcarboxylase to acetyl-CoA to form malonyl-CoA. The polypeptide is Acetyl-coenzyme A carboxylase carboxyl transferase subunit beta (Streptococcus mutans serotype c (strain NN2025)).